The following is a 329-amino-acid chain: Probable cell division protein WhiA (329 aa).

The H-T-H motif DNA-binding region spans 275–308 (SLEELGALADPPLTKDAVAGRIRRLLAMADKRAQ).

It belongs to the WhiA family.

Involved in cell division and chromosome segregation. The sequence is that of Probable cell division protein WhiA from Streptomyces griseus subsp. griseus (strain JCM 4626 / CBS 651.72 / NBRC 13350 / KCC S-0626 / ISP 5235).